Here is a 161-residue protein sequence, read N- to C-terminus: PRS fimbrial major pilin protein (161 aa).

It belongs to the fimbrial protein family.

It localises to the secreted. Its subcellular location is the fimbrium. In terms of biological role, fimbriae (also called pili), polar filaments radiating from the surface of the bacterium to a length of 0.5-1.5 micrometers and numbering 100-300 per cell, enable bacteria to colonize the epithelium of specific host organs. This Escherichia coli protein is PRS fimbrial major pilin protein (prsA).